The following is a 509-amino-acid chain: Probable cation transporter HKT2;3 (509 aa).

At 1–32 (MPIRLHIFVNSARHAINSSAFICRFIAYHLSP) the chain is on the cytoplasmic side. 2 helical membrane-spanning segments follow: residues 33–53 (LLIH…SLVV) and 96–116 (ILTL…GLVL). The Cytoplasmic segment spans residues 117–164 (ESSKQNKHDPENRRVSSVTVCKQSQLEEATPQTPSMNSIDIKKRCLKY). The next 2 helical transmembrane spans lie at 165 to 185 (LVFV…LLVF) and 237 to 257 (GLLL…PVFL). Topologically, residues 258–296 (RLVIWALRGLRLAKAEEPDFMMNNSSAVGFSHLLPNLQT) are cytoplasmic. The next 2 membrane-spanning stretches (helical) occupy residues 297-317 (IFLA…FCCL) and 353-373 (CSLV…TPSL). The Cytoplasmic portion of the chain corresponds to 374–400 (TKLFSACQDHKRIGPESDDRTSKGKPF). Transmembrane regions (helical) follow at residues 401–421 (LKMM…LVCI) and 474–494 (AYNF…LAML). Topologically, residues 495-509 (CGRLNSKDSTSARTR) are cytoplasmic.

The protein belongs to the TrkH potassium transport family. HKT (TC 2.A.38.3) subfamily.

It localises to the membrane. In terms of biological role, probable cation transporter. May be involved in regulation of potassium-sodium homeostasis. This chain is Probable cation transporter HKT2;3, found in Oryza sativa subsp. japonica (Rice).